Consider the following 527-residue polypeptide: Cytokinin dehydrogenase 3 (527 aa).

The N-terminal stretch at 1–22 (MEVAMVCTRVNLLILILSLCSP) is a signal peptide. The FAD-binding PCMH-type domain occupies 52 to 231 (LFHSPSAVLK…TRARILLQEA (180 aa)). 3 residues coordinate FAD: Ala87, Gly89, and Gly91. Residue His92 is modified to Pros-8alpha-FAD histidine. Ser93, Gln97, Asp155, Thr160, Ser166, Ile170, and Ile221 together coordinate FAD. An N-linked (GlcNAc...) asparagine glycan is attached at Asn413. Positions 471 and 509 each coordinate FAD.

Belongs to the oxygen-dependent FAD-linked oxidoreductase family. In terms of assembly, monomer. The cofactor is FAD. In terms of tissue distribution, expressed in inflorescence meristems. Highly expressed in lamina joints, and mainly in the parenchyma cells and vascular bundles on the abaxial side of the lamina joint. Expressed in roots, stems, leaves and young panicles.

The protein resides in the endoplasmic reticulum. It carries out the reaction N(6)-dimethylallyladenine + A + H2O = 3-methyl-2-butenal + adenine + AH2. In terms of biological role, catalyzes the oxidation of cytokinins, a family of N(6)-substituted adenine derivatives, where the substituent is an isopentenyl group. Cytokinins are plant hormones essential for plant growth, development, and stress responses. Exhibits specific activities toward trans-zeatin (tZ) and isopentenyladenine (iP). Plays a role in lamina joint inclination. Regulates cell proliferation and vascular bundle number on the abaxial side of lamina joint. The polypeptide is Cytokinin dehydrogenase 3 (Oryza sativa subsp. japonica (Rice)).